We begin with the raw amino-acid sequence, 1304 residues long: Splicing factor 3B subunit 1 (1304 aa).

Disordered stretches follow at residues 100 to 119 (QYDP…EDEY) and 124 to 148 (RTMI…PKMN). The segment covering 104 to 119 (FAEHRPPKIADREDEY) has biased composition (basic and acidic residues). Position 125 is a phosphothreonine (Thr-125). At Ser-129 the chain carries Phosphoserine. Lys-141 carries the post-translational modification N6-acetyllysine. Thr-142 is subject to Phosphothreonine. Arg-157 is subject to Citrulline. Residues 172–360 (LAEKAKAGEL…PVLTPGKTPI (189 aa)) form a disordered region. At Ser-194 the chain carries Phosphoserine. Residues Thr-203, Thr-207, and Thr-211 each carry the phosphothreonine modification. N6-acetyllysine; alternate is present on Lys-214. Lys-214 participates in a covalent cross-link: Glycyl lysine isopeptide (Lys-Gly) (interchain with G-Cter in SUMO2); alternate. Thr-223 and Thr-227 each carry phosphothreonine. The interaction with PPP1R8 stretch occupies residues 223–491 (TPGHTPSLRW…VDESTLSPEE (269 aa)). Ser-229 is subject to Phosphoserine. Positions 231–241 (RWDETPGRAKG) are enriched in basic and acidic residues. Phosphothreonine occurs at positions 235, 244, 248, 257, 261, 267, 273, and 278. Ser-287 carries the post-translational modification Phosphoserine. The span at 291–304 (NRWDETPKTERDTP) shows a compositional bias: basic and acidic residues. Residues Thr-296, Thr-299, Thr-303, and Thr-313 each carry the phosphothreonine modification. Phosphoserine is present on Ser-322. Phosphothreonine occurs at positions 326 and 328. Ser-332 is subject to Phosphoserine. Thr-341 carries the post-translational modification Phosphothreonine. A compositionally biased stretch (polar residues) spans 342-352 (PASQMGGSTPV). Ser-344 and Ser-349 each carry phosphoserine. A phosphothreonine mark is found at Thr-350 and Thr-354. Ser-400 carries the phosphoserine modification. Residue Lys-413 forms a Glycyl lysine isopeptide (Lys-Gly) (interchain with G-Cter in SUMO2); alternate linkage. A Glycyl lysine isopeptide (Lys-Gly) (interchain with G-Cter in SUMO1); alternate cross-link involves residue Lys-413. The residue at position 426 (Thr-426) is a Phosphothreonine. Residue Lys-430 forms a Glycyl lysine isopeptide (Lys-Gly) (interchain with G-Cter in SUMO2) linkage. The residue at position 434 (Thr-434) is a Phosphothreonine; by DYRK1A. Phosphothreonine is present on Thr-436. At Ser-488 the chain carries Phosphoserine. HEAT repeat units follow at residues 529-568 (GPLF…DLVR), 569-603 (PYVH…LAKA), 604-641 (AGLA…ALGI), 643-677 (SLLP…LMGC), 680-718 (LPHL…AATP), 763-801 (NYYT…TDGV), 843-881 (KVGA…NLGA), 1010-1048 (TPPI…RGAE), 1052-1090 (AREW…AIGP), 1122-1160 (TCSP…YIGE), and 1163-1201 (KDYI…GVYG). The interaction with PHF5A stretch occupies residues 547 to 550 (QERH). An N6-acetyllysine mark is found at Lys-554 and Lys-562. Residues 1156–1157 (EY) are interaction with PHF5A. Positions 1248–1304 (QYCLQGLFHPARKVRDVYWKIYNSIYIGSQDALIAHYPRIYNDDKNTYIRYDLDYIL) are interaction with SF3B3 and SF3B5.

This sequence belongs to the SF3B1 family. In terms of assembly, component of the 17S U2 SnRNP complex, a ribonucleoprotein complex that contains small nuclear RNA (snRNA) U2 and a number of specific proteins. Part of the SF3B subcomplex of the 17S U2 SnRNP complex. SF3B associates with the splicing subcomplex SF3A and a 12S RNA unit to form the U2 small nuclear ribonucleoproteins complex (U2 snRNP). Within the SF3B complex, interacts directly (via HEAT domain) with SF3B3, SF3B5, SF3B6 and (via HEAT domain) with PHF5A. The SF3B subcomplex interacts with U2AF2. Identified in the spliceosome C complex. Component of the minor (U12-type spliceosome) spliceosome. Within the minor spliceosome complex, interacts with SCNM1 and CRIPT. Component of the B-WICH complex, at least composed of SMARCA5/SNF2H, BAZ1B/WSTF, SF3B1, DEK, MYO1C, ERCC6, MYBBP1A and DDX21. Phosphorylated form interacts with PPP1R8. Interacts with PQBP1. Interacts with RBM17. Interacts with RBM39. Interacts with SETX. Interacts with RBM15. Interacts with USH1G. Interacts with SDE2. Interacts with U2AF1. Interacts with CACTIN. Interacts with ZRSR1. Interacts with CYREN. In terms of processing, phosphorylated. Phosphorylation occurs concomitantly with the splicing catalytic steps. Phosphorylation on Thr-244, Thr-248 and Thr-313 by cyclin-dependent kinases promotes interaction with PPP1R8 during mitosis. Citrullinated by PADI4. Ubiquitous.

It localises to the nucleus. It is found in the nucleus speckle. Its function is as follows. Component of the 17S U2 SnRNP complex of the spliceosome, a large ribonucleoprotein complex that removes introns from transcribed pre-mRNAs. The 17S U2 SnRNP complex (1) directly participates in early spliceosome assembly and (2) mediates recognition of the intron branch site during pre-mRNA splicing by promoting the selection of the pre-mRNA branch-site adenosine, the nucleophile for the first step of splicing. Within the 17S U2 SnRNP complex, SF3B1 is part of the SF3B subcomplex, which is required for 'A' complex assembly formed by the stable binding of U2 snRNP to the branchpoint sequence in pre-mRNA. Sequence independent binding of SF3A and SF3B subcomplexes upstream of the branch site is essential, it may anchor U2 snRNP to the pre-mRNA. May also be involved in the assembly of the 'E' complex. Also acts as a component of the minor spliceosome, which is involved in the splicing of U12-type introns in pre-mRNAs. Together with other U2 snRNP complex components may also play a role in the selective processing of microRNAs (miRNAs) from the long primary miRNA transcript, pri-miR-17-92. The sequence is that of Splicing factor 3B subunit 1 from Mus musculus (Mouse).